Here is a 360-residue protein sequence, read N- to C-terminus: Phospho-N-acetylmuramoyl-pentapeptide-transferase (360 aa).

A run of 10 helical transmembrane segments spans residues 27–47 (ILSI…LIAW), 73–93 (TMGG…WADL), 94–114 (TNPY…VGFV), 132–152 (WKYF…YAYG), 168–188 (VMPQ…VGTS), 199–219 (GLAI…AWAT), 236–256 (ASEL…FLWF), 263–283 (VFMG…IAVL), 288–308 (FLLV…ILQV), and 338–358 (VIVR…ATLK).

Belongs to the glycosyltransferase 4 family. MraY subfamily. Requires Mg(2+) as cofactor.

It localises to the cell inner membrane. The catalysed reaction is UDP-N-acetyl-alpha-D-muramoyl-L-alanyl-gamma-D-glutamyl-meso-2,6-diaminopimeloyl-D-alanyl-D-alanine + di-trans,octa-cis-undecaprenyl phosphate = di-trans,octa-cis-undecaprenyl diphospho-N-acetyl-alpha-D-muramoyl-L-alanyl-D-glutamyl-meso-2,6-diaminopimeloyl-D-alanyl-D-alanine + UMP. Its pathway is cell wall biogenesis; peptidoglycan biosynthesis. Its function is as follows. Catalyzes the initial step of the lipid cycle reactions in the biosynthesis of the cell wall peptidoglycan: transfers peptidoglycan precursor phospho-MurNAc-pentapeptide from UDP-MurNAc-pentapeptide onto the lipid carrier undecaprenyl phosphate, yielding undecaprenyl-pyrophosphoryl-MurNAc-pentapeptide, known as lipid I. This chain is Phospho-N-acetylmuramoyl-pentapeptide-transferase, found in Aliivibrio fischeri (strain MJ11) (Vibrio fischeri).